A 1390-amino-acid polypeptide reads, in one-letter code: DNA-directed RNA polymerase III subunit RPC1 (1390 aa).

Positions 69, 72, 79, 82, 109, and 112 each coordinate Zn(2+). Position 144 (lysine 144) interacts with DNA. 2 residues coordinate Zn(2+): cysteine 156 and cysteine 159. Residues lysine 167, serine 326, lysine 348, arginine 353, arginine 360, and arginine 366 each coordinate DNA. The residue at position 445 (lysine 445) is an N6-acetyllysine. Arginine 464 contacts RNA. Aspartate 499, aspartate 501, and aspartate 503 together coordinate Mg(2+). RNA is bound at residue aspartate 503. Residues 843-884 (TPTEFFFHTMAGREGLVDTAVKTAETGYMQRRLVKSLEDLCS) form a bridging helix region. The trigger loop stretch occupies residues 1029-1070 (PGSAVGALCAQSIGEPGTQMTLKTFHFAGVASMNITLGVPRI). Residues arginine 1159, arginine 1305, and lysine 1323 each contribute to the DNA site.

The protein belongs to the RNA polymerase beta' chain family. Component of the RNA polymerase III (Pol III) (Pol III) complex consisting of 17 subunits: a ten-subunit catalytic core composed of POLR3A/RPC1, POLR3B/RPC2, POLR1C/RPAC1, POLR1D/RPAC2, POLR3K/RPC10, POLR2E/RPABC1, POLR2F/RPABC2, POLR2H/RPABC3, POLR2K/RPABC4 and POLR2L/RPABC5; a mobile stalk composed of two subunits POLR3H/RPC8 and CRCP/RPC9, protruding from the core and functioning primarily in transcription initiation; and additional subunits homologous to general transcription factors of the RNA polymerase II machinery, POLR3C/RPC3-POLR3F/RPC6-POLR3G/RPC7 heterotrimer required for transcription initiation and POLR3D/RPC4-POLR3E/RPC5 heterodimer involved in both transcription initiation and termination. Pol III exists as two alternative complexes defined by the mutually exclusive incorporation of subunit POLR3G/RPC7alpha or POLR3GL/RPC7beta. The presence of POLR3G/RPC7alpha or POLR3GL/RPC7beta differentially modulates the transcription potential of Pol III, with POLR3G/RPC7alpha specifically associated with transcription of snaR-A non-coding RNAs. As part of the RNA polymerase III complex, interacts with PKP2. It depends on Mg(2+) as a cofactor. As to expression, expressed in the brain, in the cortex and the white matter (at protein level).

Its subcellular location is the nucleus. The protein resides in the cytoplasm. The protein localises to the cytosol. The enzyme catalyses RNA(n) + a ribonucleoside 5'-triphosphate = RNA(n+1) + diphosphate. Functionally, catalytic core component of RNA polymerase III (Pol III), a DNA-dependent RNA polymerase which synthesizes small non-coding RNAs using the four ribonucleoside triphosphates as substrates. Synthesizes 5S rRNA, snRNAs, tRNAs and miRNAs from at least 500 distinct genomic loci. Pol III-mediated transcription cycle proceeds through transcription initiation, transcription elongation and transcription termination stages. During transcription initiation, Pol III is recruited to DNA promoters type I, II or III with the help of general transcription factors and other specific initiation factors. Once the polymerase has escaped from the promoter it enters the elongation phase during which RNA is actively polymerized, based on complementarity with the template DNA strand. Transcription termination involves the release of the RNA transcript and polymerase from the DNA. Forms Pol III active center together with the second largest subunit POLR3B/RPC2. Appends one nucleotide at a time to the 3' end of the nascent RNA, with POLR3A/RPC1 contributing a Mg(2+)-coordinating DxDGD motif, and POLR3B/RPC2 participating in the coordination of a second Mg(2+) ion and providing lysine residues believed to facilitate Watson-Crick base pairing between the incoming nucleotide and template base. Typically, Mg(2+) ions direct a 5' nucleoside triphosphate to form a phosphodiester bond with the 3' hydroxyl of the preceding nucleotide of the nascent RNA, with the elimination of pyrophosphate. Pol III plays a key role in sensing and limiting infection by intracellular bacteria and DNA viruses. Acts as a nuclear and cytosolic DNA sensor involved in innate immune response. Can sense non-self dsDNA that serves as template for transcription into dsRNA. The non-self RNA polymerase III transcripts, such as Epstein-Barr virus-encoded RNAs (EBERs) induce type I interferon and NF-kappa-B through the RIG-I pathway. This Homo sapiens (Human) protein is DNA-directed RNA polymerase III subunit RPC1.